We begin with the raw amino-acid sequence, 95 residues long: Aspartyl/glutamyl-tRNA(Asn/Gln) amidotransferase subunit C (95 aa).

It belongs to the GatC family. As to quaternary structure, heterotrimer of A, B and C subunits.

The catalysed reaction is L-glutamyl-tRNA(Gln) + L-glutamine + ATP + H2O = L-glutaminyl-tRNA(Gln) + L-glutamate + ADP + phosphate + H(+). It catalyses the reaction L-aspartyl-tRNA(Asn) + L-glutamine + ATP + H2O = L-asparaginyl-tRNA(Asn) + L-glutamate + ADP + phosphate + 2 H(+). Functionally, allows the formation of correctly charged Asn-tRNA(Asn) or Gln-tRNA(Gln) through the transamidation of misacylated Asp-tRNA(Asn) or Glu-tRNA(Gln) in organisms which lack either or both of asparaginyl-tRNA or glutaminyl-tRNA synthetases. The reaction takes place in the presence of glutamine and ATP through an activated phospho-Asp-tRNA(Asn) or phospho-Glu-tRNA(Gln). The sequence is that of Aspartyl/glutamyl-tRNA(Asn/Gln) amidotransferase subunit C from Rhodopseudomonas palustris (strain ATCC BAA-98 / CGA009).